The primary structure comprises 294 residues: NADH-cytochrome b5 reductase 1 (294 aa).

The helical transmembrane segment at 18-38 threads the bilayer; sequence PFIVFATVATIISAFIGYYFL. In terms of domain architecture, FAD-binding FR-type spans 51-154; sequence DEFQKFPLIE…RGPKGFFTYT (104 aa). FAD-binding positions include 134–149 and 160–192; these read AGKN…GPKG and SFGM…KIHL.

It belongs to the flavoprotein pyridine nucleotide cytochrome reductase family. Monomer. Component of the 2-(3-amino-3-carboxypropyl)histidine synthase complex composed of DPH1, DPH2, DPH3 and a NADH-dependent reductase, predominantly CBR1. The cofactor is FAD.

Its subcellular location is the mitochondrion outer membrane. The catalysed reaction is 2 Fe(III)-[cytochrome b5] + NADH = 2 Fe(II)-[cytochrome b5] + NAD(+) + H(+). The enzyme catalyses 2 Fe(3+)-[Dph3] + NADH = 2 Fe(2+)-[Dph3] + NAD(+) + H(+). Its pathway is protein modification; peptidyl-diphthamide biosynthesis. Functionally, NADH-dependent reductase for DPH3 and cytochrome b5. Required for the first step of diphthamide biosynthesis, a post-translational modification of histidine which occurs in elongation factor 2. DPH1 and DPH2 transfer a 3-amino-3-carboxypropyl (ACP) group from S-adenosyl-L-methionine (SAM) to a histidine residue, the reaction is assisted by a reduction system comprising DPH3 and a NADH-dependent reductase, predominantly CBR1. By reducing DPH3, also involved in the formation of the tRNA wobble base modification mcm5s 2U (5-methoxycarbonylmethyl-2-thiouridine), mediated by the elongator complex. The cytochrome b5/NADH cytochrome b5 reductase electron transfer system supports the catalytic activity of several sterol biosynthetic enzymes. The chain is NADH-cytochrome b5 reductase 1 (CBR1) from Candida albicans (strain SC5314 / ATCC MYA-2876) (Yeast).